The primary structure comprises 734 residues: Photosystem I P700 chlorophyll a apoprotein A2 (734 aa).

A run of 8 helical transmembrane segments spans residues 46-69 (IFASHFGQLAIIFLWTSGNLFHVA), 135-158 (LYNGALFLVILSSISLIAGWLHLQ), 175-199 (LNHHLSGLFGVSSLAWTGHLVHVAI), 273-291 (IAHHHLAIAVVFIIAGHMY), 330-353 (LHFQLGLALASLGVITSLVAQHMY), 369-395 (AALYTHHQYIAGFIMTGAFAHGAIFFI), 417-439 (AIISHLSWASLFLGFHTLGLYVH), and 517-535 (FLVHHAIALGLHTTTLILV). Positions 559 and 568 each coordinate [4Fe-4S] cluster. 2 consecutive transmembrane segments (helical) span residues 575 to 596 (AFYLAVFWMLNTIGWVTFYWHW) and 643 to 665 (LSVWAWMFLFGHLVWATGFMFLI). H654, M662, and Y670 together coordinate chlorophyll a. Phylloquinone is bound at residue W671. The chain crosses the membrane as a helical span at residues 707 to 727 (LVGLAHFSVGYIFTYAAFLIA).

It belongs to the PsaA/PsaB family. In terms of assembly, the PsaA/B heterodimer binds the P700 chlorophyll special pair and subsequent electron acceptors. PSI consists of a core antenna complex that captures photons, and an electron transfer chain that converts photonic excitation into a charge separation. The eukaryotic PSI reaction center is composed of at least 11 subunits. It depends on P700 is a chlorophyll a/chlorophyll a' dimer, A0 is one or more chlorophyll a, A1 is one or both phylloquinones and FX is a shared 4Fe-4S iron-sulfur center. as a cofactor.

It is found in the plastid. It localises to the chloroplast thylakoid membrane. The catalysed reaction is reduced [plastocyanin] + hnu + oxidized [2Fe-2S]-[ferredoxin] = oxidized [plastocyanin] + reduced [2Fe-2S]-[ferredoxin]. Functionally, psaA and PsaB bind P700, the primary electron donor of photosystem I (PSI), as well as the electron acceptors A0, A1 and FX. PSI is a plastocyanin-ferredoxin oxidoreductase, converting photonic excitation into a charge separation, which transfers an electron from the donor P700 chlorophyll pair to the spectroscopically characterized acceptors A0, A1, FX, FA and FB in turn. Oxidized P700 is reduced on the lumenal side of the thylakoid membrane by plastocyanin. This Marchantia polymorpha (Common liverwort) protein is Photosystem I P700 chlorophyll a apoprotein A2.